The chain runs to 268 residues: Undecaprenyl-diphosphatase (268 aa).

8 helical membrane-spanning segments follow: residues 8-28 (VILGIIEGVTEFLPVSSTGHL), 41-61 (AFWDSFTVLIQLGAILAIVGL), 83-103 (FVIGVLVAFLPAVVVGLVAGK), 108-128 (VLFNPWVVCFTLIVGGAILLW), 144-164 (FPLLMYLYIGIAQCVAMIPGV), 184-204 (AAEFSFFLAIPTMIGAFAYDF), 218-238 (IVAIGFVVSFITAVIVVKTFL), and 246-266 (FVVFAWWRVIVGTLGLIALAL).

The protein belongs to the UppP family.

The protein resides in the cell inner membrane. It carries out the reaction di-trans,octa-cis-undecaprenyl diphosphate + H2O = di-trans,octa-cis-undecaprenyl phosphate + phosphate + H(+). In terms of biological role, catalyzes the dephosphorylation of undecaprenyl diphosphate (UPP). Confers resistance to bacitracin. This is Undecaprenyl-diphosphatase from Bradyrhizobium diazoefficiens (strain JCM 10833 / BCRC 13528 / IAM 13628 / NBRC 14792 / USDA 110).